A 111-amino-acid chain; its full sequence is UPF0342 protein gbs1446 (111 aa).

It belongs to the UPF0342 family.

The sequence is that of UPF0342 protein gbs1446 from Streptococcus agalactiae serotype III (strain NEM316).